A 149-amino-acid polypeptide reads, in one-letter code: Protein Rv2250A (149 aa).

The polypeptide is Protein Rv2250A (Mycobacterium tuberculosis (strain ATCC 25618 / H37Rv)).